We begin with the raw amino-acid sequence, 206 residues long: RNA pyrophosphohydrolase (206 aa).

The Nudix hydrolase domain occupies 6 to 150 (GYRPNVGIVI…KRDVYRKVMK (145 aa)). The short motif at 38-59 (GGINEGENIETAMYRELYEEVG) is the Nudix box element. The segment covering 162-191 (KPETVEKPRVERTEKRDFQKRDNQKREFRK) has biased composition (basic and acidic residues). Residues 162 to 206 (KPETVEKPRVERTEKRDFQKRDNQKREFRKSARTWNNSHQKGKAQ) are disordered.

The protein belongs to the Nudix hydrolase family. RppH subfamily. The cofactor is a divalent metal cation.

Functionally, accelerates the degradation of transcripts by removing pyrophosphate from the 5'-end of triphosphorylated RNA, leading to a more labile monophosphorylated state that can stimulate subsequent ribonuclease cleavage. The chain is RNA pyrophosphohydrolase from Actinobacillus pleuropneumoniae serotype 3 (strain JL03).